The following is a 459-amino-acid chain: MCDTIAAIATPSGTGGIGIIRISGPKSKERLTELFHSVSPKFTDFKPWMLHRGYLVAPTNEFLDDILAVYMPAPYTFTGEDVVELHCHGGHFLLLTILETVLCKNIRLAKPGEFSQRAFLNGRMDLTQAEAVAELIAASSRNEVLLASNRLKGLLGQKIIDIRRRIEELRVWICLAVDFPEEESGIFPLEKFINGLLEIHEIIQKLIHAAERSRCWKEGVTVALAGAVNAGKSSLLNALLGKERAIVTEHPGTTRDFLEECIIVNSLSIRLIDTAGLRVTSDPIEEQGIQKGREKIDEADVILFIIDGTVGVTEESKLLINNFGVERTILVWNKVDLKVPPSNWTELYTSSQVSGICVSAKTGSGIEELLVLLYNFVLSQHNAQEPTFDTIVPNMRQVEVFSLVLEEIRSLYEDIRSGIPYDLCAVMLENISSMLNSIIGFDTPEEVLNRIFASFCIGK.

(6S)-5-formyl-5,6,7,8-tetrahydrofolate-binding residues include Arg21, Glu84, and Arg123. A TrmE-type G domain is found at 219–378 (GVTVALAGAV…LLVLLYNFVL (160 aa)). GTP-binding positions include 229 to 234 (NAGKSS), 248 to 254 (TEHPGTT), and 273 to 276 (DTAG). Residues Ser233 and Thr254 each coordinate Mg(2+). Lys459 contributes to the (6S)-5-formyl-5,6,7,8-tetrahydrofolate binding site.

It belongs to the TRAFAC class TrmE-Era-EngA-EngB-Septin-like GTPase superfamily. TrmE GTPase family. In terms of assembly, homodimer. Heterotetramer of two MnmE and two MnmG subunits. The cofactor is K(+).

The protein localises to the cytoplasm. Functionally, exhibits a very high intrinsic GTPase hydrolysis rate. Involved in the addition of a carboxymethylaminomethyl (cmnm) group at the wobble position (U34) of certain tRNAs, forming tRNA-cmnm(5)s(2)U34. This is tRNA modification GTPase MnmE from Lawsonia intracellularis (strain PHE/MN1-00).